We begin with the raw amino-acid sequence, 358 residues long: Trace amine-associated receptor 7b (358 aa).

Residues methionine 1 to arginine 47 lie on the Extracellular side of the membrane. Asparagine 5 and asparagine 34 each carry an N-linked (GlcNAc...) asparagine glycan. 2 disulfide bridges follow: cysteine 37/cysteine 201 and cysteine 120/cysteine 205. A helical membrane pass occupies residues leucine 48 to valine 68. Residues methionine 69–asparagine 83 lie on the Cytoplasmic side of the membrane. A helical membrane pass occupies residues phenylalanine 84–serine 104. Residues threonine 105–lysine 121 lie on the Extracellular side of the membrane. Residues leucine 122–valine 143 traverse the membrane as a helical segment. The Cytoplasmic portion of the chain corresponds to aspartate 144 to lysine 166. A helical transmembrane segment spans residues cysteine 167–alanine 187. Topologically, residues asparagine 188–serine 212 are extracellular. N-linked (GlcNAc...) asparagine glycosylation is present at asparagine 210. The helical transmembrane segment at tryptophan 213–serine 233 threads the bilayer. The Cytoplasmic segment spans residues lysine 234–threonine 274. Residues leucine 275 to isoleucine 295 form a helical membrane-spanning segment. Residues aspartate 296 to glutamate 309 are Extracellular-facing. Residues isoleucine 310–phenylalanine 333 form a helical membrane-spanning segment. Topologically, residues arginine 334 to glutamate 358 are cytoplasmic.

The protein belongs to the G-protein coupled receptor 1 family. As to expression, specifically expressed in neurons of the olfactory epithelium.

It localises to the cell membrane. Functionally, olfactory receptor specific for N,N-dimethylalkylamines trace amines, such as N,N-dimethylcyclohexylamine. Trace amine compounds are enriched in animal body fluids and act on trace amine-associated receptors (TAARs) to elicit both intraspecific and interspecific innate behaviors. Ligand-binding causes a conformation change that triggers signaling via G(s)-class of G alpha proteins (GNAL or GNAS). The protein is Trace amine-associated receptor 7b of Mus musculus (Mouse).